The following is a 569-amino-acid chain: Rab GTPase-binding effector protein 2 (569 aa).

Disordered stretches follow at residues 1–38, 181–267, and 388–414; these read MAAAAPVAADDDERRRRPGAALEDSRPQEGANGEAELG, QRRP…ASLV, and RAEQLPSSAPQGPQQEQGEEESLPSSV. Ala2 carries the N-acetylalanine modification. The span at 29 to 38 shows a compositional bias: low complexity; that stretch reads EGANGEAELG. The stretch at 34–184 forms a coiled coil; the sequence is EAELGELSRL…ELIQEIQRRP (151 aa). Phosphoserine occurs at positions 189, 193, 200, and 204. The segment covering 245–257 has biased composition (low complexity); sequence SSSSLPRSRQGLS. A coiled-coil region spans residues 292–391; the sequence is WEQLQMEGRQ…EENQGLRAEQ (100 aa). The span at 393-403 shows a compositional bias: low complexity; it reads PSSAPQGPQQE. The stretch at 423-523 forms a coiled coil; sequence RTRQEARAQL…LQAELETSEQ (101 aa).

It belongs to the rabaptin family. Heterodimer with RABGEF1. The dimer binds RAB5A that has been activated by GTP-binding. Interacts with SDCCAG8; this interaction is important for ciliogenesis regulation. Interacts with RAB4; this interaction may mediate VEGFR2 cell surface expression.

It localises to the cytoplasm. Its subcellular location is the early endosome. The protein localises to the cytoskeleton. The protein resides in the microtubule organizing center. It is found in the centrosome. It localises to the cilium basal body. In terms of biological role, plays a role in membrane trafficking and in homotypic early endosome fusion. Participates in arteriogenesis by regulating vascular endothelial growth factor receptor 2/VEGFR2 cell surface expression and endosomal trafficking. By interacting with SDCCAG8, localizes to centrosomes and plays a critical role in ciliogenesis. In Pongo abelii (Sumatran orangutan), this protein is Rab GTPase-binding effector protein 2 (RABEP2).